The following is a 1375-amino-acid chain: DNA-directed RNA polymerase subunit beta' (1375 aa).

The interval 1-158 (MAKNEVLSLP…RVNKIIQPIR (158 aa)) is unknown. Residues 159–1353 (KTYGSKAFTH…GGLIPAGTGI (1195 aa)) form a DNA-directed RNA polymerase subunit beta' region. Zn(2+)-binding residues include Cys219, Cys221, Cys233, and Cys236. Residues Asp607, Asp609, and Asp611 each contribute to the Mg(2+) site.

It belongs to the RNA polymerase beta' chain family. In terms of assembly, the RNAP catalytic core consists of 2 alpha, 1 beta, 1 beta' and 1 omega subunit. When a sigma factor is associated with the core the holoenzyme is formed, which can initiate transcription. The cofactor is Mg(2+). Zn(2+) is required as a cofactor.

It catalyses the reaction RNA(n) + a ribonucleoside 5'-triphosphate = RNA(n+1) + diphosphate. In terms of biological role, DNA-dependent RNA polymerase catalyzes the transcription of DNA into RNA using the four ribonucleoside triphosphates as substrates. This is DNA-directed RNA polymerase subunit beta' from Acholeplasma laidlawii (strain PG-8A).